We begin with the raw amino-acid sequence, 282 residues long: MKYVGAHVSISGGVENAPQNAQAIGAKAFALFTKNQRQWTAKPITDAQIELFKRRMDEYGFVPEQTLPHDSYLINLGNPDAAKRQQSLDAFVDEMQRCAQLGLPLLNFHPGSHLRQVDEDQCLDLIVDSLNRALERTSGVVAVIENTAGQGSNLGYRFEHLAHIIAGVEDKSRIGVCLDTCHTFVAGYDLRTAEAYAKTMDTFEQVVGFSYLRGMHLNDSKPDLGAKVDRHHSLGAGKLGLETFRLIMNDGRLDGIPLILETIDESLWAQEIALLYAMQESP.

Zn(2+) is bound by residues His69, His109, Glu145, Asp179, His182, His216, Asp229, His231, and Glu261.

It belongs to the AP endonuclease 2 family. Requires Zn(2+) as cofactor.

It catalyses the reaction Endonucleolytic cleavage to 5'-phosphooligonucleotide end-products.. Functionally, endonuclease IV plays a role in DNA repair. It cleaves phosphodiester bonds at apurinic or apyrimidinic (AP) sites, generating a 3'-hydroxyl group and a 5'-terminal sugar phosphate. This is Probable endonuclease 4 from Magnetococcus marinus (strain ATCC BAA-1437 / JCM 17883 / MC-1).